Here is a 267-residue protein sequence, read N- to C-terminus: Strigolactone esterase D14 (267 aa).

The active-site Nucleophile is serine 97. Catalysis depends on residues aspartate 218 and histidine 247.

The protein belongs to the AB hydrolase superfamily. As to quaternary structure, interacts with SMXL6, SMXL7 and SMXL8. The interaction with SMXLs occurs in the presence of (2'R) stereoisomers of strigolactones, but not (2'S) stereoisomers. Interacts with MAX2. Forms a complex with MAX2 and SKP1A/ASK1 in presence of strigolactone. Expressed at high levels in rosette and cauline leaves and at lower levels in axillary buds, inflorescences, stems, roots and developing vascular tissue of cotyledons.

The protein localises to the cytoplasm. The protein resides in the nucleus. In terms of biological role, involved in strigolactone signaling pathway. Does not move long distances acropetally in the plant to regulate shoot branching and is rapidly degraded in the presence of strigolactones. Functions downstream of strigolactone synthesis, as a component of hormone signaling and as an enzyme that participates in the conversion of strigolactones to the bioactive form. Acts probably as a strigolactone receptor. Strigolactones are hormones that inhibit tillering and shoot branching through the MAX-dependent pathway, contribute to the regulation of shoot architectural response to phosphate-limiting conditions and function as rhizosphere signal that stimulates hyphal branching of arbuscular mycorrhizal fungi and trigger seed germination of root parasitic weeds. Hydrolyzes methyl carlactonoate (MeCLA), but not carlactone (CL) or carlactonoic acid (CLA). Hydrolyzes the butenolide ring of strigolactones. The initial nucleophilic attack causes an electron shift, followed by the addition of a water molecule, to lead to the release of the ABC ring product and the formation of a 'Ser-97'-stabilized open lactone intermediate. Has no esterase activity for 4-nitrophenyl butyrate. Binds and hydrolyzes the synthetic strigolactone analog GR24 in vitro. Forms a stable covalent complex with the D-ring of strigolactone, which is essential for hormone bioactivity. The D-ring is attached to His-247 of the catalytic triad. The hydrolysis of strigolactone into a covalently linked intermediate molecule initiates a conformational change of D14 to facilitate interaction with MAX2 and formation of the D14-MAX2-SKP1/ASK1 complex to trigger strigolactone signaling. This mechanism defines D14 as a non-canonical hormone receptor with dual functions to generate and sense the active form of strigolactone. This chain is Strigolactone esterase D14, found in Arabidopsis thaliana (Mouse-ear cress).